The primary structure comprises 409 residues: Elongation factor Tu, chloroplastic (409 aa).

The tr-type G domain occupies 10–214; that stretch reads KPHINIGTIG…QVDSYIPTPT (205 aa). The tract at residues 19–26 is G1; the sequence is GHVDHGKT. 19 to 26 contributes to the GTP binding site; sequence GHVDHGKT. Mg(2+) is bound at residue Thr-26. N6-methyllysine is present on Lys-57. Residues 60-64 are G2; the sequence is GITIN. The tract at residues 81 to 84 is G3; that stretch reads DCPG. Residues 81–85 and 136–139 each bind GTP; these read DCPGH and NKED. The interval 136-139 is G4; it reads NKED. Positions 174–176 are G5; it reads SAL.

Belongs to the TRAFAC class translation factor GTPase superfamily. Classic translation factor GTPase family. EF-Tu/EF-1A subfamily.

The protein localises to the plastid. It localises to the chloroplast. It carries out the reaction GTP + H2O = GDP + phosphate + H(+). Its function is as follows. GTP hydrolase that promotes the GTP-dependent binding of aminoacyl-tRNA to the A-site of ribosomes during protein biosynthesis. In Euglena gracilis, this protein is Elongation factor Tu, chloroplastic (tufA).